A 607-amino-acid polypeptide reads, in one-letter code: MTDPFDPSAFLSTCSGRPGVYRMFDSDTRLLYVGKAKNLKSRLASYFRKTGLAPKTAALVGRIAQIETTITANETEALLLEQTLIKEWRPPYNILLRDDKSYPYVFLSDGEFPRFSIHRGAKKQKGKYFGPYPSAGAIRESLSLLQKTFMVRQCEDSYYKNRTRPCLQYQIKRCKAPCVGLVEAEVYAEDVRHSVMFLEGRSNALTDELSAGMEQAASTLDFEKAAELRDQISLLRRVQDQQSMEGGSGDVDVVAAFVNPGGACVHLISVRGGRVLGSKNFFPQVGIEEEVAEVMSAFLGQYFLSSPERDLPSELIVNVVHEDFPALIAAIQELRGRELSISHRVRGTRARWQQLAVTNAEQALSARLANRQHVAARFEALAEVLNLDEPPQRLECYDISHSSGEATVASCVVFGPEGPLKSDYRRYNIEGVTAGDDYAAMHQALTRRFSKLKDGEGKLPDILLVDGGKGQLSMARDVLNELAVPDLILLGVAKGATRKTGFETLYLNDAAHEFTLKGDSPALHLIQQIRDEAHRFAITGHRARRGKTRRTSTLEDVAGVGPKRRRDLLKHFGGLQELSRASIEEIAKAPGISKKLAELIYANLHSE.

Residues 16–94 (GRPGVYRMFD…IKEWRPPYNI (79 aa)) form the GIY-YIG domain. The UVR domain maps to 203–238 (NALTDELSAGMEQAASTLDFEKAAELRDQISLLRRV).

Belongs to the UvrC family. As to quaternary structure, interacts with UvrB in an incision complex.

It is found in the cytoplasm. Functionally, the UvrABC repair system catalyzes the recognition and processing of DNA lesions. UvrC both incises the 5' and 3' sides of the lesion. The N-terminal half is responsible for the 3' incision and the C-terminal half is responsible for the 5' incision. The polypeptide is UvrABC system protein C (Pseudomonas protegens (strain DSM 19095 / LMG 27888 / CFBP 6595 / CHA0)).